The primary structure comprises 799 residues: Cadherin-8 (799 aa).

Positions 1-29 (MPERLAETLLDLWTPLIILWITLPSFVYM) are cleaved as a signal peptide. Residues 30–61 (APMNQAHVLTTGSPLELSRQSEEMRILNRSKR) constitute a propeptide that is removed on maturation. Cadherin domains follow at residues 62-167 (GWVW…APEF), 168-276 (LNGP…PPKF), 277-391 (AQSL…PPVF), 392-494 (SSPT…DNAP), and 495-616 (EFAS…YVLP). The Extracellular portion of the chain corresponds to 62–621 (GWVWNQMFVL…PYVLPIGLSM (560 aa)). N188 carries an N-linked (GlcNAc...) asparagine glycan. Residues N463, N473, and N544 are each glycosylated (N-linked (GlcNAc...) asparagine). Residues 622–642 (GALIAILACIILLLVIVVLFV) traverse the membrane as a helical segment. Topologically, residues 643–799 (TLRRHKNEPL…YSVGESDKET (157 aa)) are cytoplasmic. S795 is modified (phosphoserine).

It localises to the cell membrane. In terms of biological role, cadherins are calcium-dependent cell adhesion proteins. They preferentially interact with themselves in a homophilic manner in connecting cells; cadherins may thus contribute to the sorting of heterogeneous cell types. This chain is Cadherin-8 (Cdh8), found in Rattus norvegicus (Rat).